We begin with the raw amino-acid sequence, 495 residues long: Histidine--tRNA ligase (495 aa).

Polar residues predominate over residues 1-10; the sequence is MTTDSEQPNT. Positions 1–24 are disordered; sequence MTTDSEQPNTDFRPEARAPRGFAD. Basic and acidic residues predominate over residues 12-24; that stretch reads FRPEARAPRGFAD.

The protein belongs to the class-II aminoacyl-tRNA synthetase family. Homodimer.

Its subcellular location is the cytoplasm. It carries out the reaction tRNA(His) + L-histidine + ATP = L-histidyl-tRNA(His) + AMP + diphosphate + H(+). The polypeptide is Histidine--tRNA ligase (hisS) (Caulobacter vibrioides (strain ATCC 19089 / CIP 103742 / CB 15) (Caulobacter crescentus)).